A 440-amino-acid chain; its full sequence is Protein dumpy-20 (440 aa).

The interval 96 to 119 (ILSDPSLHGSNSSSSTSDVGSSVD) is disordered. Positions 98-119 (SDPSLHGSNSSSSTSDVGSSVD) are enriched in low complexity. 2 consecutive BED-type zinc fingers follow at residues 137 to 186 (PTEN…YQKV) and 350 to 399 (KTEH…YNDV). Zn(2+) is bound by residues cysteine 156, cysteine 159, histidine 174, histidine 179, cysteine 369, cysteine 372, histidine 387, and histidine 392.

In terms of biological role, may be directly or indirectly involved in cuticle function. The sequence is that of Protein dumpy-20 (dpy-20) from Caenorhabditis elegans.